The following is a 134-amino-acid chain: Large ribosomal subunit protein eL32 (134 aa).

It belongs to the eukaryotic ribosomal protein eL32 family.

This chain is Large ribosomal subunit protein eL32 (RPL32), found in Tetrahymena thermophila (strain SB210).